The primary structure comprises 159 residues: MRVGIGYDVHRLVEGRKLIVGGVEIPHEKGLLGHSDADVLLHAIKDALLGAVALGDIGKHFPDTDEKYKGESSLYLLNEVGRMLAEKAYVANNIDATIIAQEPKMAPYIELMRRNIAEVLGIKVEQVNIKATTTEGIGFVGRGEGIAAQAIVSVGQSLG.

Positions 8 and 10 each coordinate a divalent metal cation. Residues 8-10 (DVH) and 34-35 (HS) contribute to the 4-CDP-2-C-methyl-D-erythritol 2-phosphate site. Position 42 (histidine 42) interacts with a divalent metal cation. Residues 56-58 (DIG), 61-65 (FPDTD), 100-106 (AQEPKMA), 132-135 (TTTE), phenylalanine 139, and arginine 142 each bind 4-CDP-2-C-methyl-D-erythritol 2-phosphate.

The protein belongs to the IspF family. As to quaternary structure, homotrimer. A divalent metal cation is required as a cofactor.

It carries out the reaction 4-CDP-2-C-methyl-D-erythritol 2-phosphate = 2-C-methyl-D-erythritol 2,4-cyclic diphosphate + CMP. It participates in isoprenoid biosynthesis; isopentenyl diphosphate biosynthesis via DXP pathway; isopentenyl diphosphate from 1-deoxy-D-xylulose 5-phosphate: step 4/6. Its function is as follows. Involved in the biosynthesis of isopentenyl diphosphate (IPP) and dimethylallyl diphosphate (DMAPP), two major building blocks of isoprenoid compounds. Catalyzes the conversion of 4-diphosphocytidyl-2-C-methyl-D-erythritol 2-phosphate (CDP-ME2P) to 2-C-methyl-D-erythritol 2,4-cyclodiphosphate (ME-CPP) with a corresponding release of cytidine 5-monophosphate (CMP). The chain is 2-C-methyl-D-erythritol 2,4-cyclodiphosphate synthase from Alkaliphilus metalliredigens (strain QYMF).